We begin with the raw amino-acid sequence, 224 residues long: Peroxiredoxin-6 (224 aa).

Residues 5–169 (LLLGDEAPNF…ILRVVDSLQL (165 aa)) form the Thioredoxin domain. A required and sufficient for targeting to lysosomes and lamellar bodies region spans residues 31–40 (DSWGILFSHP). Residue Thr-44 is modified to Phosphothreonine. Cys-47 serves as the catalytic Cysteine sulfenic acid (-SOH) intermediate; for peroxidase activity. Lys-63 is subject to N6-acetyllysine. Tyr-89 carries the post-translational modification Phosphotyrosine. Thr-93 carries the post-translational modification Phosphothreonine. Asp-140 functions as the For phospholipase activity in the catalytic mechanism. At Thr-177 the chain carries Phosphothreonine; by MAPK. An N6-acetyllysine; alternate modification is found at Lys-209. N6-succinyllysine; alternate is present on Lys-209.

The protein belongs to the peroxiredoxin family. Prx6 subfamily. In terms of assembly, homodimer. Interacts with GSTP1; mediates PRDX6 glutathionylation and regeneration. Interacts with APEX1. Interacts with STH. May interact with FAM168B. May interact with HTR2A. Irreversibly inactivated by overoxidation of Cys-47 to sulfinic acid (Cys-SO(2)H) and sulfonic acid (Cys-SO(3)H) forms upon oxidative stress. In terms of processing, phosphorylation at Thr-177 by MAP kinases increases the phospholipase activity of the enzyme. The phosphorylated form exhibits a greater lysophosphatidylcholine acyltransferase activity compared to the non-phosphorylated form. Highly expressed in heart, kidney and liver. Moderate expression in brain and stomach. Very low levels in intestine.

It localises to the cytoplasm. It is found in the lysosome. The catalysed reaction is a hydroperoxide + 2 glutathione = an alcohol + glutathione disulfide + H2O. The enzyme catalyses a 1,2-diacyl-sn-glycero-3-phosphocholine + H2O = a 1-acyl-sn-glycero-3-phosphocholine + a fatty acid + H(+). It carries out the reaction a 1-acyl-sn-glycero-3-phosphocholine + an acyl-CoA = a 1,2-diacyl-sn-glycero-3-phosphocholine + CoA. It catalyses the reaction 1-hexadecanoyl-sn-glycero-3-phosphocholine + hexadecanoyl-CoA = 1,2-dihexadecanoyl-sn-glycero-3-phosphocholine + CoA. The catalysed reaction is 1,2-dihexadecanoyl-sn-glycero-3-phosphocholine + H2O = 1-hexadecanoyl-sn-glycero-3-phosphocholine + hexadecanoate + H(+). Its activity is regulated as follows. MJ33 or lithium;[(2R)-1-hexadecoxy-3-(2,2,2-trifluoroethoxy)propan-2-yl] methyl phosphate inhibits its phospholipase A2 activity. CI-976 or 2,2-Dimethyl-N-(2,4,6-trimethoxyphenyl)dodecanamide inhibits its lysophosphatidylcholine acyltransferase activity. In terms of biological role, thiol-specific peroxidase that catalyzes the reduction of hydrogen peroxide and organic hydroperoxides to water and alcohols, respectively. Can reduce H(2)O(2) and short chain organic, fatty acid, and phospholipid hydroperoxides. Has phospholipase activity. Can either reduce the oxidized sn-2 fatty acyl group of phospholipids (peroxidase activity) or hydrolyze the sn-2 ester bond of phospholipids (phospholipase activity). These activities are dependent on binding to phospholipids at acidic pH and to oxidized phospholipds at cytosolic pH. Plays a role in cell protection against oxidative stress by detoxifying peroxides and in phospholipid homeostasis. Exhibits acyl-CoA-dependent lysophospholipid acyltransferase which mediates the conversion of lysophosphatidylcholine (1-acyl-sn-glycero-3-phosphocholine or LPC) into phosphatidylcholine (1,2-diacyl-sn-glycero-3-phosphocholine or PC). Shows a clear preference for LPC as the lysophospholipid and for palmitoyl CoA as the fatty acyl substrate. The sequence is that of Peroxiredoxin-6 (Prdx6) from Mus musculus (Mouse).